Consider the following 375-residue polypeptide: MAKSDYYEILGISKNADEREIKKSYKRLAMKFHPDRNPGNTTAETKFKEIKEAYEVLSNSEKRAAYDQYGHAAFESGSMGATSNSGGADFSDIFGDVFGDIFGGNRRSRAGRGSDLRYNIELSLEDAVRGIIKEICIPTLSTCEKCRGTGARSNAAIITCMTCHGQGQVQIRQGFFSVQQSCPTCHGHGKIIKEACNKCHGNGRVERSKTLSVKIPSGVNTGDRIRLSGEGESGKNGAPSGDLYVQIQIRKHPIFDREEKNLYCEVPISFSMAALGGEIEVPTLDGRVKLKIPPETQTGKLFRMRGKGVKSVRSGGNGDLLCRVVVETPVKLNDIQKRLLQDLSDSFEGPHGNRNSPRSKSFFDGVKKFFDDLTR.

Residues 5-70 enclose the J domain; that stretch reads DYYEILGISK…EKRAAYDQYG (66 aa). Residues 130–208 form a CR-type zinc finger; it reads GIIKEICIPT…CHGNGRVERS (79 aa). 8 residues coordinate Zn(2+): cysteine 143, cysteine 146, cysteine 160, cysteine 163, cysteine 182, cysteine 185, cysteine 196, and cysteine 199. CXXCXGXG motif repeat units follow at residues 143–150, 160–167, 182–189, and 196–203; these read CEKCRGTG, CMTCHGQG, CPTCHGHG, and CNKCHGNG.

It belongs to the DnaJ family. In terms of assembly, homodimer. Requires Zn(2+) as cofactor.

The protein resides in the cytoplasm. In terms of biological role, participates actively in the response to hyperosmotic and heat shock by preventing the aggregation of stress-denatured proteins and by disaggregating proteins, also in an autonomous, DnaK-independent fashion. Unfolded proteins bind initially to DnaJ; upon interaction with the DnaJ-bound protein, DnaK hydrolyzes its bound ATP, resulting in the formation of a stable complex. GrpE releases ADP from DnaK; ATP binding to DnaK triggers the release of the substrate protein, thus completing the reaction cycle. Several rounds of ATP-dependent interactions between DnaJ, DnaK and GrpE are required for fully efficient folding. Also involved, together with DnaK and GrpE, in the DNA replication of plasmids through activation of initiation proteins. This Blochmanniella pennsylvanica (strain BPEN) protein is Chaperone protein DnaJ.